The following is a 410-amino-acid chain: Arginine deiminase (410 aa).

Cys-399 acts as the Amidino-cysteine intermediate in catalysis.

The protein belongs to the arginine deiminase family.

It localises to the cytoplasm. It carries out the reaction L-arginine + H2O = L-citrulline + NH4(+). It functions in the pathway amino-acid degradation; L-arginine degradation via ADI pathway; carbamoyl phosphate from L-arginine: step 1/2. This is Arginine deiminase from Listeria monocytogenes serovar 1/2a (strain ATCC BAA-679 / EGD-e).